A 368-amino-acid chain; its full sequence is 3-dehydroquinate synthase (368 aa).

NAD(+) contacts are provided by residues 112–116, 136–137, Lys149, Lys158, and 176–179; these read GVVGD, TT, and FLDT. Residues Glu191, His257, and His274 each contribute to the Zn(2+) site.

It belongs to the sugar phosphate cyclases superfamily. Dehydroquinate synthase family. It depends on Co(2+) as a cofactor. Zn(2+) is required as a cofactor. Requires NAD(+) as cofactor.

The protein localises to the cytoplasm. The enzyme catalyses 7-phospho-2-dehydro-3-deoxy-D-arabino-heptonate = 3-dehydroquinate + phosphate. Its pathway is metabolic intermediate biosynthesis; chorismate biosynthesis; chorismate from D-erythrose 4-phosphate and phosphoenolpyruvate: step 2/7. Catalyzes the conversion of 3-deoxy-D-arabino-heptulosonate 7-phosphate (DAHP) to dehydroquinate (DHQ). The protein is 3-dehydroquinate synthase of Natranaerobius thermophilus (strain ATCC BAA-1301 / DSM 18059 / JW/NM-WN-LF).